Consider the following 633-residue polypeptide: MTHNFAENYDIIVVGAGHAGVEASLAASRMGCKTLLATINLEMLAFMPCNPSIGGSAKGIVVREIDALGGEMGKNIDKTYIQMKMLNTGKGPAVRALRAQADKALYAQTMKQTVEKQENLTLRQAMIDEILVEDGKVVGVRTATNQKFSAKSVVITTGTALRGEIILGDLKYSSGPNNSLASVTLADNLRDLGLEIGRFKTGTPPRVKASSINYEKTEIQPGDEQPNHFSFMSRDEDYITDQVPCWLTYTNTLSHDIINQNLHRAPMFSGIVKGVGPRYCPSIEDKIVRFADKERHQLFLEPEGRYTEEVYVQGLSTSLPEDVQVDLLRSIKGLENAEMMRTGYAIEYDIVLPHQLRATLETKVIAGLFTAGQTNGTSGYEEAAGQGLVAGINAALKVQGKPELILKRSDAYIGVMIDDLVTKGTLEPYRLLTSRAEYRLILRHDNADMRLTEIGYEIGLVDEERYAIFKKRQMQFENELERLDSIKLKPVSETNKRIQELGFKPLTDALTAKEFMRRPQITYAVATDFVGCADEPLDSKVIELLETEIKYEGYIKKALDQVAKMKRMEEKRIPPHIDWDDIDSIATEARQKFKKINPETLGQASRISGVNPADISILMVYLEGRQKGRKNIN.

FAD is bound by residues 15–20 (GAGHAG), I127, and S182. Residue 276–290 (GPRYCPSIEDKIVRF) coordinates NAD(+). Q373 lines the FAD pocket.

Belongs to the MnmG family. As to quaternary structure, homodimer. Heterotetramer of two MnmE and two MnmG subunits. FAD serves as cofactor.

The protein resides in the cytoplasm. Its function is as follows. NAD-binding protein involved in the addition of a carboxymethylaminomethyl (cmnm) group at the wobble position (U34) of certain tRNAs, forming tRNA-cmnm(5)s(2)U34. The polypeptide is tRNA uridine 5-carboxymethylaminomethyl modification enzyme MnmG (Streptococcus agalactiae serotype III (strain NEM316)).